Reading from the N-terminus, the 246-residue chain is Ribosomal RNA small subunit methyltransferase J (246 aa).

S-adenosyl-L-methionine-binding positions include Glu-115–Arg-116 and Asp-169.

This sequence belongs to the methyltransferase superfamily. RsmJ family.

It is found in the cytoplasm. The catalysed reaction is guanosine(1516) in 16S rRNA + S-adenosyl-L-methionine = N(2)-methylguanosine(1516) in 16S rRNA + S-adenosyl-L-homocysteine + H(+). In terms of biological role, specifically methylates the guanosine in position 1516 of 16S rRNA. This Buchnera aphidicola subsp. Acyrthosiphon pisum (strain Tuc7) protein is Ribosomal RNA small subunit methyltransferase J.